A 233-amino-acid polypeptide reads, in one-letter code: tRNA (guanine-N(7)-)-methyltransferase (233 aa).

4 residues coordinate S-adenosyl-L-methionine: glutamate 62, glutamate 87, aspartate 116, and aspartate 138. Aspartate 138 is a catalytic residue. Substrate is bound by residues lysine 142, aspartate 174, and 212–215 (TRYE).

It belongs to the class I-like SAM-binding methyltransferase superfamily. TrmB family.

The enzyme catalyses guanosine(46) in tRNA + S-adenosyl-L-methionine = N(7)-methylguanosine(46) in tRNA + S-adenosyl-L-homocysteine. Its pathway is tRNA modification; N(7)-methylguanine-tRNA biosynthesis. Its function is as follows. Catalyzes the formation of N(7)-methylguanine at position 46 (m7G46) in tRNA. The chain is tRNA (guanine-N(7)-)-methyltransferase from Bartonella henselae (strain ATCC 49882 / DSM 28221 / CCUG 30454 / Houston 1) (Rochalimaea henselae).